The following is a 969-amino-acid chain: MPPTETLRPGERGTAGGPGAGAPEQTYIVRQSNKYYEHRDSQATAMSVDYSGQWVLLAGRGHLALQRLGQDDGSLRRHERQSKYEVSVAEFAICPSRKEYCAIATSQHIDIVRWGTAEPHYEMSLRGHTRTVTDIDWHGKDPNLLVSCSIDTFSHIWDLREPRKPALSLNAVCMSGATQVGFNRVSGNLLAAAHDGDLRIWDIRKGSCPTHYITAHLNRVHGINWSHKRETCLATASQDGTVKYFDVCNPRRAEKIITTMSPVWRARYTPIGNGLVSIVVPHLGRGENSLLLWSNSKQTDPICSFVGHTDVILDFAWRPNRESSNEIELVTWSRDRTLRVWKIDDNMLKLCEPSAEEIESRFEPDLSELRVPTPPEFLHPRSILVAASLPISTGDGACNTLPMARSPSFGGGYYRREEPHIARSLTDQPTCSLHHEFSLLNTNMPHVEVDTLDAIKRYACFKICAGGHTVILQVTFTTSYPSPSAPPDFQLCQGTTLSSEVSGVLLKVLRCNALQRVKKSRTCLEQCLRALVAAMKKKVAAVGGADRSQLLLQSPRLEGALSSTLHDACIPYPRTSGVHFNAIGMLTTFAQPVNNKRLTLRQHTALTPRTFSSINGSGLLGNVMATAQREANASFYLQERMISGKPGKQRAIRQMNGSPVVHVYDTSSLLHISRRMAREFSLDKCNIAETCRKNGEICRQHGRLDLVPVWLLAELIATPQIPHETLNDLLFYKDPFKKSLLESLIMHYAISGDIQTAVLLACLFDKCPTGGGAIMEKTVRLPPQLNSQISPYHTVLPLDVKSSSSSNTWQQLKQLRSNSWSDSLDLEIKQIQSDAYACSLIRRTKMPLFDQFKRAYAEILFGWQLLSKRALILKHTQNTPPPVQGVEFVTECRKCAKPKRTPKCEPCKRPVLFCVLCRLPVKGAANACLACGHGGHIDHMMQWFEKHNVCATCGCKCLERTSELLALLS.

Positions 1-24 (MPPTETLRPGERGTAGGPGAGAPE) are disordered. 5 WD repeats span residues 127 to 167 (GHTR…KPAL), 172 to 211 (VCMS…CPTH), 215 to 255 (AHLN…RAEK), 258 to 303 (TTMS…DPIC), and 307 to 351 (GHTD…LKLC). The residue at position 373 (threonine 373) is a Phosphothreonine. The region spanning 435-538 (HEFSLLNTNM…RALVAAMKKK (104 aa)) is the RWD domain. A C4-type zinc finger spans residues 891–911 (ECRKCAKPKRTPKCEPCKRPV). Cysteine 892, cysteine 895, cysteine 904, cysteine 907, cysteine 917, cysteine 928, histidine 933, histidine 936, histidine 939, cysteine 950, cysteine 953, cysteine 955, and cysteine 957 together coordinate Zn(2+). Residues 912 to 960 (LFCVLCRLPVKGAANACLACGHGGHIDHMMQWFEKHNVCATCGCKCLER) form an RING-type; atypical zinc finger.

It belongs to the WD repeat WDR59 family. As to quaternary structure, component of the GATOR complex consisting of mio, Nup44A/Seh1, Im11, Nplr3, Nplr2, Wdr24, Wdr59 and Sec13. Within the GATOR complex, probable component of the GATOR2 subcomplex which is likely composed of mio, Nup44A/Seh1, Wdr24, Wdr59 and Sec13. The GATOR2 complex associates with unmet in the absence of S-adenosyl-L-methionine; the mio-Wdr24-Nup44A subcomplex is essential and sufficient for this interaction while Wdr59 and Sec13 are dispensable. This association acts as a nutrient sensor to inhibit mTORC1 signaling in the absence of methionine.

It is found in the lysosome membrane. A component of the GATOR complex, which functions as a regulator of the amino acid-sensing branch of the mTORC1 signaling pathway. The two GATOR subcomplexes, GATOR1 and GATOR2, regulate the mTORC1 pathway in order to mediate metabolic homeostasis, female gametogenesis and the response to amino acid limitation and complete starvation. GATOR2 activates the mTORC1 signaling pathway through the inhibition of the GATOR1 subcomplex, controlling the switch to cell proliferation and growth under nutrient replete conditions and during female oocyte development. Acts as an atypical component of the GATOR2 subcomplex, which can either promote or inhibit mTORC1 signaling, depending on tissues: inhibits mTORC1 activity by preventing the activity of GATOR2 in the ovary and the eye imaginal disk brain, while it promotes mTORC1 activity in the fat body. This is GATOR2 complex protein Wdr59 from Drosophila melanogaster (Fruit fly).